Reading from the N-terminus, the 247-residue chain is PF03932 family protein CutC (247 aa).

The span at 205–222 (KSTRPSLMESNSSAQMGS) shows a compositional bias: polar residues. The disordered stretch occupies residues 205–226 (KSTRPSLMESNSSAQMGSNDVD).

This sequence belongs to the CutC family.

It is found in the cytoplasm. The polypeptide is PF03932 family protein CutC (Vibrio atlanticus (strain LGP32) (Vibrio splendidus (strain Mel32))).